Reading from the N-terminus, the 505-residue chain is Deoxyguanosinetriphosphate triphosphohydrolase (505 aa).

The region spanning R66–C273 is the HD domain.

The protein belongs to the dGTPase family. Type 1 subfamily. As to quaternary structure, homotetramer. The cofactor is Mg(2+).

It carries out the reaction dGTP + H2O = 2'-deoxyguanosine + triphosphate + H(+). Its function is as follows. dGTPase preferentially hydrolyzes dGTP over the other canonical NTPs. The polypeptide is Deoxyguanosinetriphosphate triphosphohydrolase (Escherichia coli O157:H7).